An 870-amino-acid polypeptide reads, in one-letter code: A-kinase anchor protein 2 (870 aa).

Disordered stretches follow at residues 14–43 and 103–165; these read PGIT…DHHE and IEKA…SSRD. S122 carries the post-translational modification Phosphoserine. A compositionally biased stretch (polar residues) spans 133 to 151; sequence GHSTDQPQDMLGNSLQAPA. S152 bears the Phosphoserine mark. The span at 152-161 shows a compositional bias: low complexity; that stretch reads SPSSSTSSHC. A Glycyl lysine isopeptide (Lys-Gly) (interchain with G-Cter in SUMO1); alternate cross-link involves residue K174. K174 is covalently cross-linked (Glycyl lysine isopeptide (Lys-Gly) (interchain with G-Cter in SUMO2); alternate). Positions 213-307 form a coiled coil; it reads EEMIELEKER…QQQQLSTSQL (95 aa). A disordered region spans residues 233–324; it reads KNPGIAAKWW…EHLDSIEHTK (92 aa). The span at 259–274 shows a compositional bias: basic and acidic residues; sequence LESHRKYKERKEKRAQ. Residues 275–302 are compositionally biased toward low complexity; that stretch reads QEQLQLQQQQQQQLQQLQQLQQQQQQQL. Over residues 313 to 324 the composition is skewed to basic and acidic residues; sequence AHEHLDSIEHTK. S347 is modified (phosphoserine). Positions 409-436 are disordered; sequence ESQSAGAGTGNAATQGKEGPYSEPSKRG. Over residues 410–424 the composition is skewed to low complexity; sequence SQSAGAGTGNAATQG. A phosphoserine mark is found at S472, S476, and S528. Positions 506–543 are enriched in polar residues; it reads FSMDNISDSGASNETPNALQENSLADFSLPQTPQTDNP. 2 disordered regions span residues 506 to 577 and 595 to 688; these read FSMD…DPLE and QVDK…RPEG. T537 is modified (phosphothreonine). A PKA-RII subunit binding domain region spans residues 576 to 589; sequence LEYQAGLLVQNAIQ. A compositionally biased stretch (basic and acidic residues) spans 595–608; it reads QVDKAEVHTSKEGS. Residue S641 is modified to Phosphoserine. Residues 644–665 are compositionally biased toward basic and acidic residues; sequence QEKRDVLPKILPGEDKTLREKG. A coiled-coil region spans residues 720-755; it reads KLRSRKQRTLSMIEEEIRAAQEREEELKRQRQVRQS. Residues S730, S758, S789, and S796 each carry the phosphoserine modification. A disordered region spans residues 740 to 814; sequence QEREEELKRQ…EAAGAQRPKN (75 aa). The segment covering 755-774 has biased composition (polar residues); the sequence is STPSPRAQNAPSLPSRTTCY.

It is found in the apical cell membrane. Binds to regulatory subunit (RII) of protein kinase A. May be involved in establishing polarity in signaling systems or in integrating PKA-RII isoforms with downstream effectors to capture, amplify and focus diffuse, trans-cellular signals carried by cAMP. Binds to and modulates the structure of the actin cytoskeleton. This Rattus norvegicus (Rat) protein is A-kinase anchor protein 2.